The following is a 1561-amino-acid chain: Adhesion G protein-coupled receptor B2 (1561 aa).

Positions Met1–Ala20 are cleaved as a signal peptide. Topologically, residues Phe21 to Leu930 are extracellular. 3 N-linked (GlcNAc...) asparagine glycosylation sites follow: Asn94, Asn182, and Asn183. An O-linked (Xyl...) (chondroitin sulfate) serine glycan is attached at Ser257. 4 TSP type-1 domains span residues Asp300–Pro353, His355–Pro408, Glu410–Pro463, and Asp466–Pro519. 14 disulfides stabilise this stretch: Cys312–Cys346, Cys316–Cys352, Cys327–Cys336, Cys367–Cys402, Cys371–Cys407, Cys382–Cys392, Cys422–Cys457, Cys426–Cys462, Cys437–Cys447, Cys478–Cys513, Cys482–Cys518, Cys493–Cys503, Cys525–Cys560, and Cys548–Cys578. Residue Asn347 is glycosylated (N-linked (GlcNAc...) asparagine). Asn428 is a glycosylation site (N-linked (GlcNAc...) asparagine). 2 N-linked (GlcNAc...) asparagine glycosylation sites follow: Asn551 and Asn636. Residues Asp748 to Leu918 form the GAIN-B domain. The tract at residues Leu757–Leu797 is disordered. The span at Ser760–Ser775 shows a compositional bias: low complexity. An N-linked (GlcNAc...) asparagine glycan is attached at Asn861. 2 disulfide bridges follow: Cys868/Cys900 and Cys888/Cys902. The GPS stretch occupies residues Cys868–Leu918. The helical transmembrane segment at Val931–Phe951 threads the bilayer. Over Trp952 to Arg959 the chain is Cytoplasmic. The chain crosses the membrane as a helical span at residues Ser960–Gly980. Residues Gln981–Gly988 lie on the Extracellular side of the membrane. The chain crosses the membrane as a helical span at residues Val989–Leu1009. Over Thr1010 to Lys1030 the chain is Cytoplasmic. The helical transmembrane segment at Arg1031–Thr1051 threads the bilayer. At Arg1052 to Tyr1072 the chain is on the extracellular side. The chain crosses the membrane as a helical span at residues Ala1073 to Phe1093. Over Asn1094 to Arg1115 the chain is Cytoplasmic. A helical membrane pass occupies residues Cys1116 to Leu1136. The Extracellular portion of the chain corresponds to Ser1137 to Ser1147. A helical membrane pass occupies residues Leu1148–Ala1168. Residues Met1169–Val1561 lie on the Cytoplasmic side of the membrane. Tyr1345 carries the phosphotyrosine modification. 3 disordered regions span residues Leu1355–Arg1377, Phe1417–Thr1447, and Arg1491–Val1561. Over residues Glu1366 to Pro1376 the composition is skewed to basic and acidic residues. Positions Arg1491–Pro1502 are enriched in basic and acidic residues. Residues Ser1519–Leu1528 are compositionally biased toward polar residues. Residues Glu1551–Val1561 show a composition bias toward acidic residues.

Belongs to the G-protein coupled receptor 2 family. Adhesion G-protein coupled receptor (ADGR) subfamily. Heterodimer of 2 chains generated by proteolytic processing; the large extracellular N-terminal fragment and the membrane-bound C-terminal fragment predominantly remain associated and non-covalently linked. Interacts with GABPB2. Interacts (via carboxy-terminus) with TAX1BP3. Interacts with GNAZ. Interacts with SH3GL2. Post-translationally, glycosylated. Autoproteolytically processed at the GPS region of the GAIN-B domain; this cleavage modulates receptor activity. Additionally, furin is involved in the cleavage at another site, in the middle of the extracellular domain, generating a soluble fragment. As to expression, specifically expressed in the brain. The peak level in the brain is observed 10 days after birth.

The protein resides in the cell membrane. Its subcellular location is the secreted. With respect to regulation, receptor activity is regulated by proteolytic processing. The long N-terminal has a an inhibitory effect on the constitutive signaling activity. Removal of the N-terminal region induces an increase of the receptor activity. Orphan G-protein coupled receptor involved in cell adhesion and probably in cell-cell interactions. Activates NFAT-signaling pathway, a transcription factor, via the G-protein GNAZ. Involved in angiogenesis inhibition. The sequence is that of Adhesion G protein-coupled receptor B2 (Adgrb2) from Mus musculus (Mouse).